Reading from the N-terminus, the 154-residue chain is Deoxyuridine 5'-triphosphate nucleotidohydrolase (154 aa).

Substrate contacts are provided by residues 64–66 (RSG), asparagine 77, 81–83 (TID), and lysine 91.

This sequence belongs to the dUTPase family. Homotrimer. Requires Mg(2+) as cofactor.

The catalysed reaction is dUTP + H2O = dUMP + diphosphate + H(+). The protein operates within pyrimidine metabolism; dUMP biosynthesis; dUMP from dCTP (dUTP route): step 2/2. This enzyme is involved in nucleotide metabolism: it produces dUMP, the immediate precursor of thymidine nucleotides and it decreases the intracellular concentration of dUTP so that uracil cannot be incorporated into DNA. This is Deoxyuridine 5'-triphosphate nucleotidohydrolase from Mycobacterium marinum (strain ATCC BAA-535 / M).